Consider the following 706-residue polypeptide: Polyribonucleotide nucleotidyltransferase (706 aa).

Mg(2+)-binding residues include Asp485 and Asp491. The region spanning 552-611 (PRMLKMKIHPDKIREVIGSGGKTINKIIEDTGVKIDIENDGTIFIAAQTQEAGELALSII) is the KH domain. In terms of domain architecture, S1 motif spans 621–689 (GDIFKGKVIK…QQGKVSLSRK (69 aa)).

Belongs to the polyribonucleotide nucleotidyltransferase family. Mg(2+) serves as cofactor.

Its subcellular location is the cytoplasm. The catalysed reaction is RNA(n+1) + phosphate = RNA(n) + a ribonucleoside 5'-diphosphate. Its function is as follows. Involved in mRNA degradation. Catalyzes the phosphorolysis of single-stranded polyribonucleotides processively in the 3'- to 5'-direction. In Alkaliphilus oremlandii (strain OhILAs) (Clostridium oremlandii (strain OhILAs)), this protein is Polyribonucleotide nucleotidyltransferase.